We begin with the raw amino-acid sequence, 151 residues long: HTH-type transcriptional regulator FL11 (151 aa).

Residues 5-66 enclose the HTH asnC-type domain; sequence LDEIDRRIIK…IVNPEALGYS (62 aa). Residues 24–43 constitute a DNA-binding region (H-T-H motif); it reads LREISKITGLAESTIHERIK. 98–104 serves as a coordination point for L-arginine; it reads ETTGDYD. Residues Asn118, Asp122, and 133 to 135 contribute to the L-lysine site; that span reads THT. Residues Asp122 and 133–135 contribute to the L-arginine site; that span reads THT.

Homodimer. Binds DNA as a dimer and an octamer.

With respect to regulation, in the famine mode, FL11 forms dimers and acts as a repressor, leading to growth arrest. In the feast mode, in the presence of high concentrations of lysine or arginine, four dimers assemble into an octamer and cover the fl11 and lysine biosynthesis promoters. This leads to the inhibition of fl11 expression and lysine biosynthesis, decrease of the FL11 concentration in the cell, derepression of the target genes and activation of the metabolism. In terms of biological role, DNA-binding protein involved in the repression of transcription of a large number of genes, thereby arresting growth, in response to environmental changes. In Pyrococcus abyssi (strain GE5 / Orsay), this protein is HTH-type transcriptional regulator FL11.